We begin with the raw amino-acid sequence, 57 residues long: Non-structural protein 3a (57 aa).

An N-terminal signal peptide occupies residues 1-22 (MIQSPTSFLIVLILLWCKLVLS).

In terms of biological role, involved in resistance to IFN. The protein is Non-structural protein 3a of Avian infectious bronchitis virus (strain Portugal/322/82) (IBV).